Reading from the N-terminus, the 400-residue chain is Phosphoglycerate kinase (400 aa).

Substrate contacts are provided by residues 21-23 (DFN), arginine 36, 59-62 (HLGR), arginine 119, and arginine 160. ATP contacts are provided by residues lysine 211, glutamate 329, and 356 to 359 (GGDS).

The protein belongs to the phosphoglycerate kinase family. In terms of assembly, monomer.

The protein localises to the cytoplasm. The catalysed reaction is (2R)-3-phosphoglycerate + ATP = (2R)-3-phospho-glyceroyl phosphate + ADP. Its pathway is carbohydrate degradation; glycolysis; pyruvate from D-glyceraldehyde 3-phosphate: step 2/5. The polypeptide is Phosphoglycerate kinase (Lactiplantibacillus plantarum (strain ATCC BAA-793 / NCIMB 8826 / WCFS1) (Lactobacillus plantarum)).